The following is a 429-amino-acid chain: MSSVVVVGTQWGDEGKGKITDFLSEHAEVVARYQGGNNAGHTIVFGGVKYKLHLIPSGIFYKEKICVIGNGLVVDPKALLEELKYLHDRGVSTDNLRVSNRAHVILPYHLKQDELEEASKGDDKIGTTKKGIGPAYMDKAARIGIRMADLLDREAFKEKLERNLAQKNRLFEKMYDTEGFSVEEIFEEYFEYGQQIAQYVCDTSVVLNDALDNNHRVLFEGAQGVMLDIDHGTYPFVTSSNPIAGGVTVGTGVGPAKVTRVVGVCKAYTSRVGDGPFPTELHDEIGHQIREVGREYGTTTGRPRRVGWFDSVVVRHARRVSGLTDLSLNSIDVLTGIPTLKICVAYKCDGKVIDEVPANLNILAKCEPVYEELPGWTEDITGVRSLDELPENARKYVERVSELTGIQLSMFSVGPDRNQTNIVRNVYEA.

Residues 12 to 18 and 40 to 42 each bind GTP; these read GDEGKGK and GHT. The Proton acceptor role is filled by Asp13. Residues Asp13 and Gly40 each contribute to the Mg(2+) site. IMP is bound by residues 13-16, 38-41, Thr128, Arg142, Gln223, Thr238, and Arg302; these read DEGK and NAGH. The active-site Proton donor is the His41. 298-304 contributes to the substrate binding site; the sequence is TTTGRPR. Residues Arg304, 330–332, and 412–414 each bind GTP; these read SID and SVG.

The protein belongs to the adenylosuccinate synthetase family. Homodimer. It depends on Mg(2+) as a cofactor.

It localises to the cytoplasm. The catalysed reaction is IMP + L-aspartate + GTP = N(6)-(1,2-dicarboxyethyl)-AMP + GDP + phosphate + 2 H(+). It participates in purine metabolism; AMP biosynthesis via de novo pathway; AMP from IMP: step 1/2. Functionally, plays an important role in the de novo pathway of purine nucleotide biosynthesis. Catalyzes the first committed step in the biosynthesis of AMP from IMP. This Bacillus cereus (strain ZK / E33L) protein is Adenylosuccinate synthetase.